Reading from the N-terminus, the 467-residue chain is Fumarate hydratase class II (467 aa).

Substrate is bound by residues 98 to 100 (SGT), Arg126, 129 to 132 (HPND), 139 to 141 (SSN), and Thr187. His188 functions as the Proton donor/acceptor in the catalytic mechanism. Ser318 is an active-site residue. Substrate contacts are provided by residues Ser319 and 324 to 326 (KVN).

It belongs to the class-II fumarase/aspartase family. Fumarase subfamily. Homotetramer.

Its subcellular location is the cytoplasm. The catalysed reaction is (S)-malate = fumarate + H2O. It functions in the pathway carbohydrate metabolism; tricarboxylic acid cycle; (S)-malate from fumarate: step 1/1. Involved in the TCA cycle. Catalyzes the stereospecific interconversion of fumarate to L-malate. In Salmonella typhi, this protein is Fumarate hydratase class II.